Reading from the N-terminus, the 298-residue chain is NADH-cytochrome b5 reductase 2 (298 aa).

A helical membrane pass occupies residues 15–38; sequence FVLPVAAAAVGLASYSFTSSSFIA. One can recognise an FAD-binding FR-type domain in the interval 49–153; that stretch reads DEWIDLKLIS…KGPFVKWKWE (105 aa). 156–191 serves as a coordination point for FAD; sequence QFKSIALIGGGTGITPLYQLIHEITKNPADKTQVSL.

The protein belongs to the flavoprotein pyridine nucleotide cytochrome reductase family. FAD is required as a cofactor.

It is found in the mitochondrion outer membrane. It carries out the reaction 2 Fe(III)-[cytochrome b5] + NADH = 2 Fe(II)-[cytochrome b5] + NAD(+) + H(+). Its function is as follows. May mediate the reduction of outer membrane cytochrome b5. This Scheffersomyces stipitis (strain ATCC 58785 / CBS 6054 / NBRC 10063 / NRRL Y-11545) (Yeast) protein is NADH-cytochrome b5 reductase 2 (MCR1).